A 1452-amino-acid chain; its full sequence is ABC-type transporter adrC (1452 aa).

Residues 1-38 (MAPEEGDQAMSHEDKAACSSLNTTSSTELFDGAPSSEN) form a disordered region. Positions 19 to 28 (SSLNTTSSTE) are enriched in polar residues. One can recognise an ABC transporter 1 domain in the interval 116-378 (KRLMSIVGNK…FETMGWKRPP (263 aa)). Helical transmembrane passes span 487–507 (IPAL…IGSL), 524–544 (VLFL…TTLY), 569–589 (VIVD…IVYF), 598–618 (SHFF…ATIF), 631–651 (AMAL…FTVP), and 738–758 (GILV…TELI). Residues 813–1055 (FSWKGLSYDI…TVLEYLEDKG (243 aa)) form the ABC transporter 2 domain. Position 849–856 (849–856 (GVSGAGKT)) interacts with ATP. A run of 7 helical transmembrane segments spans residues 1149-1169 (YILA…FSFW), 1181-1201 (VLFS…QIMP), 1224-1244 (VFIL…GICT), 1264-1284 (LVLL…QLVV), 1287-1307 (VPSV…CLLF), 1322-1344 (IFMN…ALHG), and 1415-1435 (FGIF…LYYL).

Belongs to the ABC transporter superfamily. ABCG family. PDR (TC 3.A.1.205) subfamily.

It localises to the membrane. Its function is as follows. ABC-type transporter; part of the gene cluster that mediates the biosynthesis of the meroterpenoid compound andrastin A, a promising antitumoral compound. Is required for the production of andrastin A but does not have a significant role in its secretion. This Penicillium roqueforti protein is ABC-type transporter adrC.